The chain runs to 345 residues: MNTEASQDQTVTETPGVRLRQARESLGLTQQTVAERLCLKVSTIRDIEEDNAQANLASTFHRGYIRSYAKLVHLPEDELLPILEKQAPVRAAKVAPMQSFSLGKKHKKRDGWLMSFTWLIVLVVLGLTGAWWWQNHQAQQAEIANMVDQSSAQLSQNGGQPVPLTDDNSDAIAPTDAPAPVANGQPVPLTNHSGSAITNSATTSSVPKTTSTEPVDTANTNTTMHQEGAASAAVSPSQVPQPGMPTGQPPLPTADAGVSGSASSVGALVMNFTADCWLQVVDATGKTLFSGIQKGGAVLNLAGKAPYKLTIGAPGALTISYQGNPVDLSKFIKANRVARLTVCVE.

Residues 1–111 lie on the Cytoplasmic side of the membrane; that stretch reads MNTEASQDQT…LGKKHKKRDG (111 aa). One can recognise an HTH cro/C1-type domain in the interval 19–79; the sequence is LRQARESLGL…KLVHLPEDEL (61 aa). Positions 30–49 form a DNA-binding region, H-T-H motif; the sequence is QQTVAERLCLKVSTIRDIEE. Residues 112-132 form a helical; Signal-anchor for type II membrane protein membrane-spanning segment; it reads WLMSFTWLIVLVVLGLTGAWW. The Periplasmic portion of the chain corresponds to 133 to 345; it reads WQNHQAQQAE…RVARLTVCVE (213 aa). The segment at 151–259 is disordered; it reads SAQLSQNGGQ…PLPTADAGVS (109 aa). Residues 188–225 are compositionally biased toward polar residues; sequence PLTNHSGSAITNSATTSSVPKTTSTEPVDTANTNTTMH. The segment covering 229-241 has biased composition (low complexity); it reads AASAAVSPSQVPQ.

The protein belongs to the RodZ family.

It is found in the cell inner membrane. Functionally, cytoskeletal protein that is involved in cell-shape control through regulation of the length of the long axis. The chain is Cytoskeleton protein RodZ from Yersinia pestis bv. Antiqua (strain Antiqua).